The chain runs to 59 residues: Large ribosomal subunit protein uL30 (59 aa).

The protein belongs to the universal ribosomal protein uL30 family. Part of the 50S ribosomal subunit.

This is Large ribosomal subunit protein uL30 from Solibacter usitatus (strain Ellin6076).